The following is a 276-amino-acid chain: Secreted LysM effector LysM10 (276 aa).

Residues 1 to 22 (MLLSLVKFGILSVFLLAQEAVA) form the signal peptide. Residues asparagine 27, asparagine 104, and asparagine 140 are each glycosylated (N-linked (GlcNAc...) asparagine). In terms of domain architecture, LysM spans 219 to 264 (KTYIAKEDDTCKSISEAQSISTDRLVEVNHLDYSCSSLTSGTALCI). N-linked (GlcNAc...) asparagine glycosylation occurs at asparagine 267.

The protein belongs to the secreted LysM effector family.

It localises to the secreted. Its function is as follows. Secreted LysM effector that might have a role in sequestration of chitin oligosaccharides (breakdown products of fungal cell walls that are released during invasion and act as triggers of host immunity) to dampen host defense. The sequence is that of Secreted LysM effector LysM10 from Penicillium expansum (Blue mold rot fungus).